The chain runs to 507 residues: Cytochrome P450 monooxygenase nodZ (507 aa).

Helical transmembrane passes span 1–21 and 205–225; these read MITA…FSLL and GFLH…PWFL. Residue Asn352 is glycosylated (N-linked (GlcNAc...) asparagine). Cys445 provides a ligand contact to heme.

It belongs to the cytochrome P450 family. Requires heme as cofactor.

It is found in the membrane. It participates in secondary metabolite biosynthesis. Functionally, cytochrome P450 monooxygenase; part of the gene cluster that mediates the biosynthesis of the indole diterpenes nodulisporic acids (NA). Nodulisporic acid A (NAA) and its chemically modified derivatives are of particular significance because of their highly potent insecticidal activity against blood-feeding arthropods and lack of observable adverse effects on mammals, in particular the tremogenicity associated with the paspaline-derived IDTs is not observed. The geranylgeranyl diphosphate (GGPP) synthase ggs1, localized outside of the cluster, is proposed to catalyze the first step in nodulisporic acid biosynthesis via conversion of farnesyl pyrophosphate and isopentyl pyrophosphate into geranylgeranyl pyrophosphate (GGPP). Condensation of indole-3-glycerol phosphate with GGPP by the prenyl transferase nodC then forms 3-geranylgeranylindole (3-GGI). Epoxidation by the FAD-dependent monooxygenase nodM leads to a single-epoxidized-GGI that is substrate of the terpene cyclase nodB for cyclization to yield emindole SB. The terminal methyl carbon, C28, of emindole SB is then oxidized by the cytochrome P450 monooxygenase nodW to produce nodulisporic acid F (NAF), the pentacyclic core of NAA. NAF is converted to nodulisporic acid E (NAE) via prenylation. This step is probably performed by one of the indole diterpene prenyltransferases nodD1 or nodD2. Several oxidation steps performed by the FAD-linked oxidoreductase nodO and one of the cytochrome P450 monooxygenase nodR, nodX or nodZ further convert NAE to nodulisporic acid D (NAD). NAD is substrate of cytochrome P450 monooxygenase nodJ to produce the precursor of nodulisporic acid C (NAC), converted to NAC by one of the indole diterpene prenyltransferases nodD1 or nodD2. The FAD-dependent monooxygenase nodY2 then oxidizes NAC to nodulisporic acid B (NAB). Finally NAB is converted to NAA by one of the cytochrome P450 monooxygenases nodR, nodX or nodZ. The sequence is that of Cytochrome P450 monooxygenase nodZ from Hypoxylon pulicicidum.